The following is a 515-amino-acid chain: Putative acetolactate synthase large subunit IlvX (515 aa).

Glu48 is a thiamine diphosphate binding site. Residues Phe249–Arg269 and Asp283–Asp302 contribute to the FAD site. The tract at residues Thr357–Ala436 is thiamine pyrophosphate binding. Residues Asp407 and Asn434 each contribute to the Mg(2+) site.

The protein belongs to the TPP enzyme family. In terms of assembly, heterodimer of large catalytic subunit and small regulatory subunit. The cofactor is Mg(2+). Thiamine diphosphate is required as a cofactor.

The catalysed reaction is 2 pyruvate + H(+) = (2S)-2-acetolactate + CO2. Its pathway is amino-acid biosynthesis; L-isoleucine biosynthesis; L-isoleucine from 2-oxobutanoate: step 1/4. It functions in the pathway amino-acid biosynthesis; L-valine biosynthesis; L-valine from pyruvate: step 1/4. Catalyzes the conversion of 2 pyruvate molecules into acetolactate in the first common step of the biosynthetic pathway of the branched-amino acids such as leucine, isoleucine, and valine. This Mycobacterium tuberculosis (strain ATCC 25618 / H37Rv) protein is Putative acetolactate synthase large subunit IlvX (ilvX).